Here is a 74-residue protein sequence, read N- to C-terminus: Beta-defensin 39 (74 aa).

A signal peptide spans 1-23 (MKISYFLLLILSLGSSQINPVSG). 3 cysteine pairs are disulfide-bonded: cysteine 29-cysteine 58, cysteine 36-cysteine 51, and cysteine 41-cysteine 59.

Belongs to the beta-defensin family. As to expression, only expressed in epididymis (caput, corpus and cauda).

The protein resides in the secreted. In terms of biological role, has antibacterial activity. This chain is Beta-defensin 39 (Defb39), found in Mus musculus (Mouse).